We begin with the raw amino-acid sequence, 485 residues long: ATP-dependent protease ATPase subunit HslU (485 aa).

ATP is bound by residues Ile22 and 64 to 69 (GVGKTE). Residues 146–189 (KKTAATSAQPQDVSQASSGTTISLPSVSSTAQAEEHKAQNENDM) are disordered. Residues 149–177 (AATSAQPQDVSQASSGTTISLPSVSSTAQ) show a composition bias toward polar residues. Over residues 178–189 (AEEHKAQNENDM) the composition is skewed to basic and acidic residues. Residues Asp297, Glu363, and Arg435 each coordinate ATP.

This sequence belongs to the ClpX chaperone family. HslU subfamily. A double ring-shaped homohexamer of HslV is capped on each side by a ring-shaped HslU homohexamer. The assembly of the HslU/HslV complex is dependent on binding of ATP.

It is found in the cytoplasm. Functionally, ATPase subunit of a proteasome-like degradation complex; this subunit has chaperone activity. The binding of ATP and its subsequent hydrolysis by HslU are essential for unfolding of protein substrates subsequently hydrolyzed by HslV. HslU recognizes the N-terminal part of its protein substrates and unfolds these before they are guided to HslV for hydrolysis. In Treponema denticola (strain ATCC 35405 / DSM 14222 / CIP 103919 / JCM 8153 / KCTC 15104), this protein is ATP-dependent protease ATPase subunit HslU.